Here is a 279-residue protein sequence, read N- to C-terminus: Alcohol dehydrogenase-related 31 kDa protein (279 aa).

11–34 (YVADCGGIALETSKVLMTKNIAKL) contacts NAD(+). Residue Ser-139 participates in substrate binding. Tyr-152 acts as the Proton acceptor in catalysis.

Belongs to the short-chain dehydrogenases/reductases (SDR) family.

This chain is Alcohol dehydrogenase-related 31 kDa protein (Adhr), found in Drosophila subobscura (Fruit fly).